The sequence spans 396 residues: ATP synthase subunit beta, chloroplastic (396 aa).

An ATP-binding site is contributed by 74-81 (GGAGVGKT).

The protein belongs to the ATPase alpha/beta chains family. As to quaternary structure, F-type ATPases have 2 components, CF(1) - the catalytic core - and CF(0) - the membrane proton channel. CF(1) has five subunits: alpha(3), beta(3), gamma(1), delta(1), epsilon(1). CF(0) has four main subunits: a(1), b(1), b'(1) and c(9-12).

It localises to the plastid. The protein resides in the chloroplast thylakoid membrane. It catalyses the reaction ATP + H2O + 4 H(+)(in) = ADP + phosphate + 5 H(+)(out). Produces ATP from ADP in the presence of a proton gradient across the membrane. The catalytic sites are hosted primarily by the beta subunits. The sequence is that of ATP synthase subunit beta, chloroplastic from Adiantum raddianum (Maidenhair fern).